The sequence spans 444 residues: Na(+)-translocating NADH-quinone reductase subunit A (444 aa).

The protein belongs to the NqrA family. As to quaternary structure, composed of six subunits; NqrA, NqrB, NqrC, NqrD, NqrE and NqrF.

It catalyses the reaction a ubiquinone + n Na(+)(in) + NADH + H(+) = a ubiquinol + n Na(+)(out) + NAD(+). In terms of biological role, NQR complex catalyzes the reduction of ubiquinone-1 to ubiquinol by two successive reactions, coupled with the transport of Na(+) ions from the cytoplasm to the periplasm. NqrA to NqrE are probably involved in the second step, the conversion of ubisemiquinone to ubiquinol. The polypeptide is Na(+)-translocating NADH-quinone reductase subunit A (Shewanella frigidimarina (strain NCIMB 400)).